A 203-amino-acid chain; its full sequence is Pyridoxal 5'-phosphate synthase subunit PdxT (203 aa).

49 to 51 contacts L-glutamine; it reads GES. Cysteine 81 (nucleophile) is an active-site residue. L-glutamine is bound by residues arginine 110 and 139–140; that span reads IR. Residues histidine 175 and glutamate 177 each act as charge relay system in the active site.

It belongs to the glutaminase PdxT/SNO family. In the presence of PdxS, forms a dodecamer of heterodimers. Only shows activity in the heterodimer.

It carries out the reaction aldehydo-D-ribose 5-phosphate + D-glyceraldehyde 3-phosphate + L-glutamine = pyridoxal 5'-phosphate + L-glutamate + phosphate + 3 H2O + H(+). The catalysed reaction is L-glutamine + H2O = L-glutamate + NH4(+). The protein operates within cofactor biosynthesis; pyridoxal 5'-phosphate biosynthesis. Functionally, catalyzes the hydrolysis of glutamine to glutamate and ammonia as part of the biosynthesis of pyridoxal 5'-phosphate. The resulting ammonia molecule is channeled to the active site of PdxS. This chain is Pyridoxal 5'-phosphate synthase subunit PdxT, found in Parafrankia sp. (strain EAN1pec).